Here is a 100-residue protein sequence, read N- to C-terminus: uncharacterized protein (100 aa).

The protein belongs to the csb family.

This is an uncharacterized protein from Dictyostelium discoideum (Social amoeba).